Reading from the N-terminus, the 284-residue chain is MKLVIVSGRSGSGKSVALRVLEDLGYYCVDNLPLPLIGSLLEQLKGSNDLVAISVDVRNMPEQDKVLVQQLSNLPAGTEITSFFLNSSDKVLLKRYSETRRLHPLSKSRVSLQEAIKLEGKLLEPMSKLVDHYIDTSNLNIYDLSDQVRQILLGSVDKELVIYFESFGFKNGMPTEADFMFDVRFLPNPHWELALRPLTGLDEPVAEFLNRQPLVNKFIWQIENLLETWLPHLERNNRSYLTIAIGCTGGQHRSVYVAEQLAKRFSNGKHKVNVRHRELDNAKA.

Position 8-15 (8-15 (GRSGSGKS)) interacts with ATP. 56–59 (DVRN) serves as a coordination point for GTP.

This sequence belongs to the RapZ-like family.

Functionally, displays ATPase and GTPase activities. The polypeptide is Nucleotide-binding protein Sputcn32_0712 (Shewanella putrefaciens (strain CN-32 / ATCC BAA-453)).